Consider the following 341-residue polypeptide: Uroporphyrinogen decarboxylase (341 aa).

Substrate is bound by residues 23–27, Phe42, Asp73, Tyr148, Ser203, and His318; that span reads RQAGR.

The protein belongs to the uroporphyrinogen decarboxylase family. Homodimer.

The protein localises to the cytoplasm. The catalysed reaction is uroporphyrinogen III + 4 H(+) = coproporphyrinogen III + 4 CO2. It functions in the pathway porphyrin-containing compound metabolism; protoporphyrin-IX biosynthesis; coproporphyrinogen-III from 5-aminolevulinate: step 4/4. Its function is as follows. Catalyzes the decarboxylation of four acetate groups of uroporphyrinogen-III to yield coproporphyrinogen-III. The chain is Uroporphyrinogen decarboxylase from Brucella melitensis biotype 1 (strain ATCC 23456 / CCUG 17765 / NCTC 10094 / 16M).